The sequence spans 1374 residues: Sterol 3-beta-glucosyltransferase (1374 aa).

The span at 1 to 14 shows a compositional bias: basic and acidic residues; the sequence is MRPLRDDAKRRADR. Disordered regions lie at residues 1-60, 83-190, and 206-227; these read MRPL…RDGN, ARFD…PRAA, and TSAT…QPQS. Over residues 16–28 the composition is skewed to polar residues; it reads LSASMKPTSSNRP. The span at 29–41 shows a compositional bias: basic and acidic residues; sequence FSDRVPDRFKDGD. The segment covering 101–112 has biased composition (polar residues); that stretch reads VEQTTGKASSRT. A compositionally biased stretch (basic and acidic residues) spans 125 to 138; sequence KRSEPSKLVLEERG. A GRAM 1 domain is found at 234–283; the sequence is MRLMKMFEFAKPEKVLVEYACSLLQSMLLQGYMYVTEGHICFYAYLPKKS. In terms of domain architecture, PH spans 285-382; the sequence is VAIKSGYLSK…WVKALQQVIF (98 aa). The segment at 458 to 538 is disordered; sequence ATKEAQDQHD…SMTDTTESAS (81 aa). Basic and acidic residues-rich tracts occupy residues 461 to 473 and 490 to 499; these read EAQD…HQPE and SDQRREDSPR. Over residues 503–538 the composition is skewed to polar residues; the sequence is SSVGNENQGSADSFAEQGTGSSPIIQSMTDTTESAS. A GRAM 2 domain is found at 704–770; it reads DRFRAHFALP…KDIENVEKEK (67 aa). Residues S893, R894, D896, A1196, H1198, H1211, G1215, T1216, D1235, and Q1236 each coordinate UDP-alpha-D-glucose. The span at 1314-1325 shows a compositional bias: polar residues; that stretch reads ASSTPFSPTPTA. Positions 1314 to 1338 are disordered; the sequence is ASSTPFSPTPTAKASPDGGDDDLDD.

This sequence belongs to the glycosyltransferase 28 family.

It localises to the cytoplasm. The protein resides in the preautophagosomal structure membrane. It catalyses the reaction a sterol + UDP-alpha-D-glucose = a sterol 3-beta-D-glucoside + UDP + H(+). It carries out the reaction ergosterol + UDP-alpha-D-glucose = ergosteryl 3-beta-D-glucoside + UDP + H(+). In terms of biological role, sterol glycosyltransferase responsible for the glycosylation of ergosterol to form ergosterol-glucoside. This chain is Sterol 3-beta-glucosyltransferase, found in Penicillium rubens (strain ATCC 28089 / DSM 1075 / NRRL 1951 / Wisconsin 54-1255) (Penicillium chrysogenum).